We begin with the raw amino-acid sequence, 228 residues long: Small ribosomal subunit protein uS3 (228 aa).

Residues 39–107 (VREFIRERLK…PVHINIEEIR (69 aa)) form the KH type-2 domain.

The protein belongs to the universal ribosomal protein uS3 family. In terms of assembly, part of the 30S ribosomal subunit. Forms a tight complex with proteins S10 and S14.

Functionally, binds the lower part of the 30S subunit head. Binds mRNA in the 70S ribosome, positioning it for translation. The chain is Small ribosomal subunit protein uS3 from Halorhodospira halophila (strain DSM 244 / SL1) (Ectothiorhodospira halophila (strain DSM 244 / SL1)).